Here is a 116-residue protein sequence, read N- to C-terminus: Putative gamma-glutamylcyclotransferase PH0828 (116 aa).

Tyr13–Leu16 is a binding site for substrate. Glu76 (proton acceptor) is an active-site residue.

It belongs to the gamma-glutamylcyclotransferase family.

Its function is as follows. Putative gamma-glutamylcyclotransferase. In Pyrococcus horikoshii (strain ATCC 700860 / DSM 12428 / JCM 9974 / NBRC 100139 / OT-3), this protein is Putative gamma-glutamylcyclotransferase PH0828.